The following is a 572-amino-acid chain: Zyxin (572 aa).

A2 is modified (N-acetylalanine). Residues 23–351 form a disordered region; that stretch reads QKKFGPVVAP…VRSPGAPGPL (329 aa). 2 stretches are compositionally biased toward pro residues: residues 63 to 78 and 93 to 108; these read IPPP…PPPL and FPPP…PPAP. Residues S116, S142, S143, S169, and S170 each carry the phosphoserine modification. Over residues 143 to 156 the composition is skewed to low complexity; it reads SIDLEIDSLSSLLD. Residue T179 is modified to Phosphothreonine. Positions 202 to 239 are enriched in low complexity; the sequence is SPSSSQPLPQVPAPAQSQTQFHVQPQPQPKPQVQLHVQ. The span at 240–252 shows a compositional bias: polar residues; the sequence is SQTQPVSLANTQP. R253 carries the post-translational modification Asymmetric dimethylarginine. The segment covering 253-265 has biased composition (pro residues); it reads RGPPASSPAPAPK. The residue at position 259 (S259) is a Phosphoserine. Position 265 is an N6-acetyllysine (K265). The residue at position 267 (S267) is a Phosphoserine. T270 is subject to Phosphothreonine. K272 carries the N6-acetyllysine modification. At T274 the chain carries Phosphothreonine. At K279 the chain carries N6-acetyllysine. Phosphoserine is present on residues S281, S288, and S308. The segment covering 305–318 has biased composition (polar residues); it reads GTGSPQPPSFTYAQ. Residues 319–330 show a composition bias toward basic and acidic residues; it reads QREKPRVQEKQH. S344 carries the phosphoserine modification. 3 LIM zinc-binding domains span residues 384–443, 444–503, and 504–570; these read CGRC…TLEK, CNTC…YAPR, and CSVC…TARA.

Belongs to the zyxin/ajuba family. In terms of assembly, interacts with HPV type 6 protein E6. Does not interact significantly with E6 proteins from HPV types 11, 16, or 18. Interacts, via the Pro-rich regions, with the EVH1 domains of ENAH, EVL and VASP. Interacts with the first LIM domain of TES. Interacts with NEBL (isoform 2). Interacts with SYNPO2. (Microbial infection) Interacts with human papillomavirus type 6/HPV6 protein E6. Does not interact significantly with E6 proteins from HPV types 11, 16, or 18.

It localises to the cytoplasm. Its subcellular location is the cytoskeleton. The protein localises to the nucleus. The protein resides in the cell junction. It is found in the focal adhesion. In terms of biological role, adhesion plaque protein. Binds alpha-actinin and the CRP protein. Important for targeting TES and ENA/VASP family members to focal adhesions and for the formation of actin-rich structures. May be a component of a signal transduction pathway that mediates adhesion-stimulated changes in gene expression. The sequence is that of Zyxin (ZYX) from Homo sapiens (Human).